A 181-amino-acid chain; its full sequence is Large ribosomal subunit protein uL5 (181 aa).

Belongs to the universal ribosomal protein uL5 family. As to quaternary structure, part of the 50S ribosomal subunit; part of the 5S rRNA/L5/L18/L25 subcomplex. Contacts the 5S rRNA and the P site tRNA. Forms a bridge to the 30S subunit in the 70S ribosome.

In terms of biological role, this is one of the proteins that bind and probably mediate the attachment of the 5S RNA into the large ribosomal subunit, where it forms part of the central protuberance. In the 70S ribosome it contacts protein S13 of the 30S subunit (bridge B1b), connecting the 2 subunits; this bridge is implicated in subunit movement. Contacts the P site tRNA; the 5S rRNA and some of its associated proteins might help stabilize positioning of ribosome-bound tRNAs. The sequence is that of Large ribosomal subunit protein uL5 from Campylobacter jejuni subsp. jejuni serotype O:6 (strain 81116 / NCTC 11828).